We begin with the raw amino-acid sequence, 472 residues long: SURF6 homolog gldi-11 (472 aa).

Disordered regions lie at residues 53–73 (LSKK…AKGL), 89–232 (KSKQ…SPEI), 249–350 (KVER…DRAL), and 414–472 (LVKK…GRIL). Positions 95-106 (KVQPQKVVAPVK) are enriched in low complexity. Basic and acidic residues predominate over residues 107–132 (RPADQNKNKEKVVKKDQKKQDKKADS). Acidic residues predominate over residues 133-150 (DSEEDDSSDDEEKEETDE). The segment covering 151–160 (PVAKKQKKEE) has biased composition (basic and acidic residues). Composition is skewed to acidic residues over residues 161–175 (SSDD…EEPE) and 182–194 (EAED…EEEE). Residues 197-210 (SKPNKTVAQSTLKS) are compositionally biased toward polar residues. Positions 212–221 (GKIDKEIQKL) are enriched in basic and acidic residues. Basic residues predominate over residues 274–285 (LKRRESKLKLKQ). A compositionally biased stretch (basic and acidic residues) spans 286 to 305 (RRAEEKKGKEAAAQVKKETV). Residues 414 to 426 (LVKKNKMKDRRKQ) show a composition bias toward basic residues. The segment covering 427-443 (KWENRENKTEGEKQTKQ) has biased composition (basic and acidic residues). Residues 459-472 (KRKMNKLRNKGRIL) show a composition bias toward basic residues.

Belongs to the SURF6 family.

It is found in the nucleus. Its subcellular location is the nucleoplasm. In terms of biological role, binds to both DNA and RNA in vitro, with a stronger binding capacity for RNA. May represent a nucleolar constitutive protein involved in ribosomal biosynthesis or assembly. The polypeptide is SURF6 homolog gldi-11 (Caenorhabditis elegans).